The following is a 402-amino-acid chain: L-threonine ammonia-lyase (402 aa).

The residue at position 51 (Lys-51) is an N6-(pyridoxal phosphate)lysine. Pyridoxal 5'-phosphate-binding positions include Asn-78, 178 to 181 (GGGL), and Ser-302. The region spanning 327 to 402 (KLKVELDDLP…GVGYLVDVLK (76 aa)) is the ACT domain.

Belongs to the serine/threonine dehydratase family. Pyridoxal 5'-phosphate serves as cofactor.

It carries out the reaction L-threonine = 2-oxobutanoate + NH4(+). The catalysed reaction is L-serine = pyruvate + NH4(+). It functions in the pathway amino-acid biosynthesis; L-isoleucine biosynthesis; 2-oxobutanoate from L-threonine: step 1/1. Functionally, catalyzes the conversion of threonine to 2-oxobutanoate and ammonia. Functions in the threonine-dependent pathway of isoleucine biosynthesis, which is the minor pathway for isoleucine biosynthesis in G.sulfurreducens. Also displays serine ammonia-lyase activity, yielding pyruvate from L-serine. This Geobacter sulfurreducens (strain ATCC 51573 / DSM 12127 / PCA) protein is L-threonine ammonia-lyase.